The following is a 458-amino-acid chain: Argininosuccinate lyase (458 aa).

Belongs to the lyase 1 family. Argininosuccinate lyase subfamily.

The protein resides in the cytoplasm. It catalyses the reaction 2-(N(omega)-L-arginino)succinate = fumarate + L-arginine. The protein operates within amino-acid biosynthesis; L-arginine biosynthesis; L-arginine from L-ornithine and carbamoyl phosphate: step 3/3. This is Argininosuccinate lyase from Salmonella schwarzengrund (strain CVM19633).